Reading from the N-terminus, the 200-residue chain is Pyridoxal 5'-phosphate synthase subunit PdxT (200 aa).

52 to 54 (GES) is a binding site for L-glutamine. The active-site Nucleophile is Cys84. L-glutamine-binding positions include Arg116 and 145 to 146 (IR). Catalysis depends on charge relay system residues His181 and Glu183.

The protein belongs to the glutaminase PdxT/SNO family. As to quaternary structure, in the presence of PdxS, forms a dodecamer of heterodimers. Only shows activity in the heterodimer.

It carries out the reaction aldehydo-D-ribose 5-phosphate + D-glyceraldehyde 3-phosphate + L-glutamine = pyridoxal 5'-phosphate + L-glutamate + phosphate + 3 H2O + H(+). The enzyme catalyses L-glutamine + H2O = L-glutamate + NH4(+). It functions in the pathway cofactor biosynthesis; pyridoxal 5'-phosphate biosynthesis. Functionally, catalyzes the hydrolysis of glutamine to glutamate and ammonia as part of the biosynthesis of pyridoxal 5'-phosphate. The resulting ammonia molecule is channeled to the active site of PdxS. This chain is Pyridoxal 5'-phosphate synthase subunit PdxT, found in Sulfurisphaera tokodaii (strain DSM 16993 / JCM 10545 / NBRC 100140 / 7) (Sulfolobus tokodaii).